Consider the following 119-residue polypeptide: Large ribosomal subunit protein bL20 (119 aa).

This sequence belongs to the bacterial ribosomal protein bL20 family.

Binds directly to 23S ribosomal RNA and is necessary for the in vitro assembly process of the 50S ribosomal subunit. It is not involved in the protein synthesizing functions of that subunit. The sequence is that of Large ribosomal subunit protein bL20 from Caldicellulosiruptor bescii (strain ATCC BAA-1888 / DSM 6725 / KCTC 15123 / Z-1320) (Anaerocellum thermophilum).